We begin with the raw amino-acid sequence, 345 residues long: Dihydroorotase (345 aa).

2 residues coordinate Zn(2+): His13 and His15. Substrate is bound by residues 15-17 (HFR) and Asn41. Zn(2+)-binding residues include Lys98, His135, and His173. N6-carboxylysine is present on Lys98. Residue His135 coordinates substrate. Position 218 (Leu218) interacts with substrate. Residue Asp246 participates in Zn(2+) binding. Residue Asp246 is part of the active site. The substrate site is built by His250 and Ala262.

The protein belongs to the metallo-dependent hydrolases superfamily. DHOase family. Class II DHOase subfamily. In terms of assembly, homodimer. Zn(2+) serves as cofactor.

The catalysed reaction is (S)-dihydroorotate + H2O = N-carbamoyl-L-aspartate + H(+). Its pathway is pyrimidine metabolism; UMP biosynthesis via de novo pathway; (S)-dihydroorotate from bicarbonate: step 3/3. Catalyzes the reversible cyclization of carbamoyl aspartate to dihydroorotate. The polypeptide is Dihydroorotase (Shewanella halifaxensis (strain HAW-EB4)).